We begin with the raw amino-acid sequence, 317 residues long: Carbonic anhydrase 5B, mitochondrial (317 aa).

A mitochondrion-targeting transit peptide spans 1–33 (MAVMNHLRVILQVSSSTLPWRRCWVPRLVPRRS). Positions 37 to 296 (YTCTYRTRNR…LMNRTVRSSF (260 aa)) constitute an Alpha-carbonic anhydrase domain. Histidine 130, histidine 132, and histidine 155 together coordinate Zn(2+). 235–236 (TT) contacts substrate.

The protein belongs to the alpha-carbonic anhydrase family. Zn(2+) serves as cofactor. In terms of tissue distribution, expressed in the heart, liver, lung, kidney, testis, and skeletal muscle (at protein level).

Its subcellular location is the mitochondrion. The enzyme catalyses hydrogencarbonate + H(+) = CO2 + H2O. In terms of biological role, mitochondrial carbonic anhydrase that catalyzes the reversible conversion of carbon dioxide to bicarbonate/HCO3. This Mus musculus (Mouse) protein is Carbonic anhydrase 5B, mitochondrial (Ca5b).